The sequence spans 265 residues: GTP cyclohydrolase FolE2 (265 aa).

The protein belongs to the GTP cyclohydrolase IV family.

The enzyme catalyses GTP + H2O = 7,8-dihydroneopterin 3'-triphosphate + formate + H(+). It functions in the pathway cofactor biosynthesis; 7,8-dihydroneopterin triphosphate biosynthesis; 7,8-dihydroneopterin triphosphate from GTP: step 1/1. Its function is as follows. Converts GTP to 7,8-dihydroneopterin triphosphate. The chain is GTP cyclohydrolase FolE2 from Bordetella bronchiseptica (strain ATCC BAA-588 / NCTC 13252 / RB50) (Alcaligenes bronchisepticus).